A 480-amino-acid polypeptide reads, in one-letter code: UDP-N-acetylmuramate--L-alanine ligase (480 aa).

ATP is bound at residue 126–132 (GTHGKTT).

It belongs to the MurCDEF family.

The protein resides in the cytoplasm. The enzyme catalyses UDP-N-acetyl-alpha-D-muramate + L-alanine + ATP = UDP-N-acetyl-alpha-D-muramoyl-L-alanine + ADP + phosphate + H(+). The protein operates within cell wall biogenesis; peptidoglycan biosynthesis. Functionally, cell wall formation. The chain is UDP-N-acetylmuramate--L-alanine ligase from Blochmanniella pennsylvanica (strain BPEN).